The chain runs to 124 residues: UPF0538 protein (124 aa).

This sequence belongs to the UPF0538 family.

The chain is UPF0538 protein from Dictyostelium discoideum (Social amoeba).